The following is a 132-amino-acid chain: Small ribosomal subunit protein uS8 (132 aa).

This sequence belongs to the universal ribosomal protein uS8 family. As to quaternary structure, part of the 30S ribosomal subunit. Contacts proteins S5 and S12.

Its function is as follows. One of the primary rRNA binding proteins, it binds directly to 16S rRNA central domain where it helps coordinate assembly of the platform of the 30S subunit. This is Small ribosomal subunit protein uS8 from Paracoccus denitrificans (strain Pd 1222).